A 112-amino-acid chain; its full sequence is MEILMSITAGVLFMVGTYLILTKSLLRVVVGLILLSHGAHLLLLTMAGLQRGAPPLLHLEATTYSDPLPQALILTAIVISFGVTSFLLVLAYRTYKEHKTDDLDQLRGSADE.

Transmembrane regions (helical) follow at residues 4–21, 28–50, and 70–92; these read LMSITAGVLFMVGTYLIL, VVVGLILLSHGAHLLLLTMAGLQ, and QALILTAIVISFGVTSFLLVLAY.

It belongs to the CPA3 antiporters (TC 2.A.63) subunit C family. As to quaternary structure, forms a heterooligomeric complex that consists of seven subunits: MrpA, MrpB, MrpC, MrpD, MrpE, MrpF and MrpG.

The protein resides in the cell membrane. In terms of biological role, mnh complex is a Na(+)Li(+)/H(+) antiporter involved in Na(+) and/or Li(+) excretion and Na(+) resistance. Na(+)/H(+) antiport consumes a transmembrane electrical potential, and is thus inferred to be electrogenic. Does not transport K(+), Ca(2+) or Mg(2+). The polypeptide is Na(+)/H(+) antiporter subunit C (mrpC) (Alkalihalophilus pseudofirmus (strain ATCC BAA-2126 / JCM 17055 / OF4) (Bacillus pseudofirmus)).